The primary structure comprises 178 residues: Deoxycytidylate deaminase (178 aa).

The CMP/dCMP-type deaminase domain maps to E14–F145. H84 provides a ligand contact to Zn(2+). E86 serves as the catalytic Proton donor. Positions 110 and 113 each coordinate Zn(2+). S174 is modified (phosphoserine).

The protein belongs to the cytidine and deoxycytidylate deaminase family. In terms of assembly, homohexamer. Zn(2+) is required as a cofactor.

It catalyses the reaction dCMP + H2O + H(+) = dUMP + NH4(+). It carries out the reaction 5-hydroxymethyl-dCMP + H2O + H(+) = 5-hydroxymethyl-dUMP + NH4(+). Allosteric enzyme whose activity is greatly influenced by the end products of its metabolic pathway, dCTP and dTTP. Its function is as follows. Catalyzes the deamination of dCMP to dUMP, providing the nucleoside monophosphate substrate for the thymidylate synthase/TYMS. Also, part of a nucleotide salvage pathway that eliminates epigenetically modified 5-hydroxymethyl-dCMP (hmdCMP) in a two-step process entailing deamination to cytotoxic 5-hydroxymethyl-dUMP (hmdUMP), followed by its hydrolysis into 5-hydroxymethyluracil (hmU) and 2-deoxy-D-ribose 5-phosphate (deoxyribosephosphate). Catalyzes the first step in that pathway, the deamination of 5-hydroxymethyl-dCMP (hmdCMP). This chain is Deoxycytidylate deaminase, found in Homo sapiens (Human).